The chain runs to 742 residues: 5-methyltetrahydropteroyltriglutamate--homocysteine methyltransferase (742 aa).

Residues 18-21 (REWK) and Lys-112 each bind 5-methyltetrahydropteroyltri-L-glutamate. L-homocysteine-binding positions include 420–422 (IGS) and Glu-473. Residues 420–422 (IGS) and Glu-473 contribute to the L-methionine site. Trp-550 lines the 5-methyltetrahydropteroyltri-L-glutamate pocket. Position 588 (Asp-588) interacts with L-homocysteine. Position 588 (Asp-588) interacts with L-methionine. Residue Glu-594 participates in 5-methyltetrahydropteroyltri-L-glutamate binding. 3 residues coordinate Zn(2+): His-630, Cys-632, and Glu-654. His-683 (proton donor) is an active-site residue. Residue Cys-715 participates in Zn(2+) binding.

Belongs to the vitamin-B12 independent methionine synthase family. The cofactor is Zn(2+).

It catalyses the reaction 5-methyltetrahydropteroyltri-L-glutamate + L-homocysteine = tetrahydropteroyltri-L-glutamate + L-methionine. It participates in amino-acid biosynthesis; L-methionine biosynthesis via de novo pathway; L-methionine from L-homocysteine (MetE route): step 1/1. Catalyzes the transfer of a methyl group from 5-methyltetrahydrofolate to homocysteine resulting in methionine formation. The chain is 5-methyltetrahydropteroyltriglutamate--homocysteine methyltransferase from Staphylococcus aureus (strain Mu3 / ATCC 700698).